Reading from the N-terminus, the 194-residue chain is UPF0301 protein BQ03640 (194 aa).

Belongs to the UPF0301 (AlgH) family.

The protein is UPF0301 protein BQ03640 of Bartonella quintana (strain Toulouse) (Rochalimaea quintana).